The following is a 438-amino-acid chain: UDP-N-acetylmuramate--L-alanine ligase (438 aa).

An ATP-binding site is contributed by G108–S114.

It belongs to the MurCDEF family.

It localises to the cytoplasm. The enzyme catalyses UDP-N-acetyl-alpha-D-muramate + L-alanine + ATP = UDP-N-acetyl-alpha-D-muramoyl-L-alanine + ADP + phosphate + H(+). It functions in the pathway cell wall biogenesis; peptidoglycan biosynthesis. Cell wall formation. This chain is UDP-N-acetylmuramate--L-alanine ligase, found in Oceanobacillus iheyensis (strain DSM 14371 / CIP 107618 / JCM 11309 / KCTC 3954 / HTE831).